We begin with the raw amino-acid sequence, 34 residues long: Endoglucanase 1 (34 aa).

The enzyme catalyses Endohydrolysis of (1-&gt;4)-beta-D-glucosidic linkages in cellulose, lichenin and cereal beta-D-glucans.. The protein is Endoglucanase 1 of Sclerotinia sclerotiorum (White mold).